The primary structure comprises 98 residues: AAIVKLGGDDGSLAFVPNNITVGAGESIEFINNAGFPHNIVFDEDAVPAGVDADAISAEDYLNSKGQTVVRKLTTPGTYGVYCDPHSGAGMKMTITVQ.

The region spanning 1 to 98 (AAIVKLGGDD…AGMKMTITVQ (98 aa)) is the Plastocyanin-like domain. Cu cation-binding residues include H38, C83, H86, and M91.

Belongs to the plastocyanin family. Cu(2+) is required as a cofactor.

It localises to the plastid. The protein resides in the chloroplast thylakoid membrane. Functionally, participates in electron transfer between P700 and the cytochrome b6-f complex in photosystem I. The sequence is that of Plastocyanin (PETE) from Ulva prolifera (Green seaweed).